A 105-amino-acid polypeptide reads, in one-letter code: Large ribosomal subunit protein eL36 (105 aa).

The protein belongs to the eukaryotic ribosomal protein eL36 family. Component of the large ribosomal subunit.

It is found in the cytoplasm. It localises to the cytosol. Functionally, component of the large ribosomal subunit. The ribosome is a large ribonucleoprotein complex responsible for the synthesis of proteins in the cell. The protein is Large ribosomal subunit protein eL36 (RPL36) of Gallus gallus (Chicken).